A 330-amino-acid chain; its full sequence is MQGSVTEFLKPRLVDIEQVSSTHAKVTLEPLERGFGHTLGNALRRILLSSMPGCAVTEVEIDGVLHEYSTKEGVQEDILEILLNLKGLAVRVQGKDEVILTLNKSGIGPVTAADITHDGDVEIVKPQHVICHLTDENASISMRIKVQRGRGYVPASARIHSEEDERPIGRLLVDACYSPVERIAYNVEAARVEQRTDLDKLVIEMETNGTIDPEEAIRRAATILAEQLEAFVDLRDVRQPEVKEEKPEFDPILLRPVDDLELTVRSANCLKAEAIHYIGDLVQRTEVELLKTPNLGKKSLTEIKDVLASRGLSLGMRLENWPPASIADNE.

The alpha N-terminal domain (alpha-NTD) stretch occupies residues 1-235 (MQGSVTEFLK…EQLEAFVDLR (235 aa)). The tract at residues 249–330 (FDPILLRPVD…WPPASIADNE (82 aa)) is alpha C-terminal domain (alpha-CTD).

The protein belongs to the RNA polymerase alpha chain family. As to quaternary structure, homodimer. The RNAP catalytic core consists of 2 alpha, 1 beta, 1 beta' and 1 omega subunit. When a sigma factor is associated with the core the holoenzyme is formed, which can initiate transcription.

The catalysed reaction is RNA(n) + a ribonucleoside 5'-triphosphate = RNA(n+1) + diphosphate. Its function is as follows. DNA-dependent RNA polymerase catalyzes the transcription of DNA into RNA using the four ribonucleoside triphosphates as substrates. This chain is DNA-directed RNA polymerase subunit alpha, found in Yersinia enterocolitica serotype O:8 / biotype 1B (strain NCTC 13174 / 8081).